A 281-amino-acid polypeptide reads, in one-letter code: MKKRYWMAPLLIAAAGLAAFWSIFTIPTQPELVTIGRNQQGEPLLCYQHPQSEVLDLDGELNLLVWNIYKQNRANWSTQLTELSRDQQLLLLQEANMTPAFKEWIHQLGWDGTQARAFEAFGETAGVINLAKVMPTMACAYTQLEPWLRLPKSAIYARYRLSDGQELVVVNLHAVNFTYGTQEYQQQLIALLDELRDFTGPVIVAGDFNSWSEARMALLSTQLASVGLQEVRFSPDNRTTFINGLPLDHVFYRGLQLEKAEAPISDASDHNPLLVRFRLLN.

This sequence belongs to the UPF0294 family.

It is found in the cytoplasm. This chain is UPF0294 protein VC_2238, found in Vibrio cholerae serotype O1 (strain ATCC 39315 / El Tor Inaba N16961).